A 312-amino-acid chain; its full sequence is Acetyl-coenzyme A carboxylase carboxyl transferase subunit alpha (312 aa).

In terms of domain architecture, CoA carboxyltransferase C-terminal spans 36–286 (RLEKEVKSIY…KEYFLDALRT (251 aa)).

It belongs to the AccA family. Acetyl-CoA carboxylase is a heterohexamer composed of biotin carboxyl carrier protein (AccB), biotin carboxylase (AccC) and two subunits each of ACCase subunit alpha (AccA) and ACCase subunit beta (AccD).

The protein localises to the cytoplasm. The catalysed reaction is N(6)-carboxybiotinyl-L-lysyl-[protein] + acetyl-CoA = N(6)-biotinyl-L-lysyl-[protein] + malonyl-CoA. The protein operates within lipid metabolism; malonyl-CoA biosynthesis; malonyl-CoA from acetyl-CoA: step 1/1. Component of the acetyl coenzyme A carboxylase (ACC) complex. First, biotin carboxylase catalyzes the carboxylation of biotin on its carrier protein (BCCP) and then the CO(2) group is transferred by the carboxyltransferase to acetyl-CoA to form malonyl-CoA. This is Acetyl-coenzyme A carboxylase carboxyl transferase subunit alpha from Helicobacter pylori (strain P12).